A 413-amino-acid chain; its full sequence is Serine hydroxymethyltransferase (413 aa).

(6S)-5,6,7,8-tetrahydrofolate-binding positions include Leu-119 and 123 to 125; that span reads GHL. Position 228 is an N6-(pyridoxal phosphate)lysine (Lys-228). Position 243 (Glu-243) interacts with (6S)-5,6,7,8-tetrahydrofolate.

Belongs to the SHMT family. Homodimer. The cofactor is pyridoxal 5'-phosphate.

The protein localises to the cytoplasm. The enzyme catalyses (6R)-5,10-methylene-5,6,7,8-tetrahydrofolate + glycine + H2O = (6S)-5,6,7,8-tetrahydrofolate + L-serine. The protein operates within one-carbon metabolism; tetrahydrofolate interconversion. It participates in amino-acid biosynthesis; glycine biosynthesis; glycine from L-serine: step 1/1. Functionally, catalyzes the reversible interconversion of serine and glycine with tetrahydrofolate (THF) serving as the one-carbon carrier. This reaction serves as the major source of one-carbon groups required for the biosynthesis of purines, thymidylate, methionine, and other important biomolecules. Also exhibits THF-independent aldolase activity toward beta-hydroxyamino acids, producing glycine and aldehydes, via a retro-aldol mechanism. The chain is Serine hydroxymethyltransferase from Thermoanaerobacter pseudethanolicus (strain ATCC 33223 / 39E) (Clostridium thermohydrosulfuricum).